Here is a 181-residue protein sequence, read N- to C-terminus: Large ribosomal subunit protein uL5 (181 aa).

It belongs to the universal ribosomal protein uL5 family. In terms of assembly, part of the 50S ribosomal subunit; contacts the 5S rRNA and probably tRNA. Forms a bridge to the 30S subunit in the 70S ribosome.

Its function is as follows. This is one of the proteins that bind and probably mediate the attachment of the 5S RNA into the large ribosomal subunit, where it forms part of the central protuberance. In the 70S ribosome it contacts protein S13 of the 30S subunit (bridge B1b), connecting the 2 subunits; this bridge is implicated in subunit movement. May contact the P site tRNA; the 5S rRNA and some of its associated proteins might help stabilize positioning of ribosome-bound tRNAs. This Methanococcus maripaludis (strain C7 / ATCC BAA-1331) protein is Large ribosomal subunit protein uL5.